The sequence spans 93 residues: Small ribosomal subunit protein uS19c (93 aa).

It belongs to the universal ribosomal protein uS19 family.

It is found in the plastid. It localises to the chloroplast. Protein S19 forms a complex with S13 that binds strongly to the 16S ribosomal RNA. This Lolium perenne (Perennial ryegrass) protein is Small ribosomal subunit protein uS19c.